Consider the following 45-residue polypeptide: Myotoxin-3 (45 aa).

Disulfide bonds link C4-C36, C11-C30, and C18-C37.

Monomer. Expressed by the venom gland.

It is found in the secreted. In terms of biological role, cationic peptide that possesses multiple functions. It acts as a cell-penetrating peptide (CPP), and as a potent voltage-gated potassium channel (Kv) inhibitor. It exhibits antimicrobial activities, hind limb paralysis, and severe muscle necrosis by a non-enzymatic mechanism. The chain is Myotoxin-3 from Crotalus viridis viridis (Prairie rattlesnake).